The primary structure comprises 117 residues: Large ribosomal subunit protein bL19 (117 aa).

Belongs to the bacterial ribosomal protein bL19 family.

Functionally, this protein is located at the 30S-50S ribosomal subunit interface and may play a role in the structure and function of the aminoacyl-tRNA binding site. This chain is Large ribosomal subunit protein bL19, found in Thermotoga neapolitana (strain ATCC 49049 / DSM 4359 / NBRC 107923 / NS-E).